Consider the following 676-residue polypeptide: uncharacterized protein (676 aa).

This is an uncharacterized protein from Magallana gigas (Pacific oyster).